A 365-amino-acid polypeptide reads, in one-letter code: sn-glycerol-3-phosphate import ATP-binding protein UgpC (365 aa).

Positions 4 to 234 (LSLRNVQKHY…PASTFVAGFI (231 aa)) constitute an ABC transporter domain. 36–43 (GPSGCGKS) contacts ATP.

It belongs to the ABC transporter superfamily. sn-glycerol-3-phosphate importer (TC 3.A.1.1.3) family. In terms of assembly, the complex is composed of two ATP-binding proteins (UgpC), two transmembrane proteins (UgpA and UgpE) and a solute-binding protein (UgpB).

It is found in the cell inner membrane. It catalyses the reaction sn-glycerol 3-phosphate(out) + ATP + H2O = sn-glycerol 3-phosphate(in) + ADP + phosphate + H(+). In terms of biological role, part of the ABC transporter complex UgpBAEC involved in sn-glycerol-3-phosphate (G3P) import. Responsible for energy coupling to the transport system. The sequence is that of sn-glycerol-3-phosphate import ATP-binding protein UgpC from Ralstonia nicotianae (strain ATCC BAA-1114 / GMI1000) (Ralstonia solanacearum).